We begin with the raw amino-acid sequence, 95 residues long: Large ribosomal subunit protein uL23 (95 aa).

This sequence belongs to the universal ribosomal protein uL23 family. In terms of assembly, part of the 50S ribosomal subunit. Contacts protein L29, and trigger factor when it is bound to the ribosome.

Its function is as follows. One of the early assembly proteins it binds 23S rRNA. One of the proteins that surrounds the polypeptide exit tunnel on the outside of the ribosome. Forms the main docking site for trigger factor binding to the ribosome. This chain is Large ribosomal subunit protein uL23, found in Geobacillus kaustophilus (strain HTA426).